The primary structure comprises 596 residues: Elongation factor 4 (596 aa).

The tr-type G domain occupies 2–184 (KHIRNFSIIA…VIVAQIPSPE (183 aa)). Residues 14-19 (DHGKST) and 131-134 (NKID) contribute to the GTP site.

It belongs to the TRAFAC class translation factor GTPase superfamily. Classic translation factor GTPase family. LepA subfamily.

It localises to the cell inner membrane. It carries out the reaction GTP + H2O = GDP + phosphate + H(+). In terms of biological role, required for accurate and efficient protein synthesis under certain stress conditions. May act as a fidelity factor of the translation reaction, by catalyzing a one-codon backward translocation of tRNAs on improperly translocated ribosomes. Back-translocation proceeds from a post-translocation (POST) complex to a pre-translocation (PRE) complex, thus giving elongation factor G a second chance to translocate the tRNAs correctly. Binds to ribosomes in a GTP-dependent manner. This Shewanella sediminis (strain HAW-EB3) protein is Elongation factor 4.